Reading from the N-terminus, the 85-residue chain is Coiled-coil-helix-coiled-coil-helix domain-containing protein 7 (85 aa).

In terms of domain architecture, CHCH spans Ile13–Val55. Short sequence motifs (cx9C motif) lie at residues Cys16–Cys26 and Cys37–Cys47. Cystine bridges form between Cys16-Cys47 and Cys26-Cys37.

Belongs to the CHCHD7 family. In terms of assembly, monomer.

The protein localises to the mitochondrion intermembrane space. This Homo sapiens (Human) protein is Coiled-coil-helix-coiled-coil-helix domain-containing protein 7 (CHCHD7).